Here is a 477-residue protein sequence, read N- to C-terminus: tRNA-2-methylthio-N(6)-dimethylallyladenosine synthase (477 aa).

One can recognise an MTTase N-terminal domain in the interval 3 to 120; sequence KKLHIKTWGC…LPTMIKQVQE (118 aa). [4Fe-4S] cluster is bound by residues C12, C49, C83, C157, C161, and C164. The Radical SAM core domain maps to 143–375; it reads RAEGATAFVS…QHVINNQSMQ (233 aa). The 64-residue stretch at 378 to 441 folds into the TRAM domain; it reads RAMLGSTQRI…PNSLRGKFLR (64 aa).

This sequence belongs to the methylthiotransferase family. MiaB subfamily. In terms of assembly, monomer. Requires [4Fe-4S] cluster as cofactor.

It is found in the cytoplasm. It carries out the reaction N(6)-dimethylallyladenosine(37) in tRNA + (sulfur carrier)-SH + AH2 + 2 S-adenosyl-L-methionine = 2-methylsulfanyl-N(6)-dimethylallyladenosine(37) in tRNA + (sulfur carrier)-H + 5'-deoxyadenosine + L-methionine + A + S-adenosyl-L-homocysteine + 2 H(+). In terms of biological role, catalyzes the methylthiolation of N6-(dimethylallyl)adenosine (i(6)A), leading to the formation of 2-methylthio-N6-(dimethylallyl)adenosine (ms(2)i(6)A) at position 37 in tRNAs that read codons beginning with uridine. The chain is tRNA-2-methylthio-N(6)-dimethylallyladenosine synthase from Aeromonas hydrophila subsp. hydrophila (strain ATCC 7966 / DSM 30187 / BCRC 13018 / CCUG 14551 / JCM 1027 / KCTC 2358 / NCIMB 9240 / NCTC 8049).